A 117-amino-acid polypeptide reads, in one-letter code: MGAARRIDPTQPYVKKKNIINFTVATENTHIHLADGQSFPVLKGEIIATDQQGNQFVELEKNLDDYVPVKKSSLYESMAQGYMEMGDINREISEAFNYAENEAETVTTKLITGAYND.

This Bacillus subtilis (strain 168) protein is SPbeta prophage-derived uncharacterized protein YosL (yosL).